Here is a 353-residue protein sequence, read N- to C-terminus: Elongation factor Ts (353 aa).

The interval 80 to 83 (TDFV) is involved in Mg(2+) ion dislocation from EF-Tu.

This sequence belongs to the EF-Ts family.

Its subcellular location is the cytoplasm. Functionally, associates with the EF-Tu.GDP complex and induces the exchange of GDP to GTP. It remains bound to the aminoacyl-tRNA.EF-Tu.GTP complex up to the GTP hydrolysis stage on the ribosome. In Sulfurovum sp. (strain NBC37-1), this protein is Elongation factor Ts.